The chain runs to 324 residues: Probable peptidylglycine alpha-hydroxylating monooxygenase 1 (324 aa).

A signal peptide spans 1 to 22 (MPRFYLLSSCALLAFATSFCNA). 2 disulfides stabilise this stretch: Cys41/Cys85 and Cys73/Cys101. His66 and His67 together coordinate Cu cation. Residue His142 participates in Cu cation binding. Asn182 is a glycosylation site (N-linked (GlcNAc...) asparagine). Cu cation is bound by residues His207, His209, and Met284. Cys264 and Cys285 are joined by a disulfide.

Belongs to the copper type II ascorbate-dependent monooxygenase family. Cu(2+) serves as cofactor.

The protein localises to the secreted. It carries out the reaction a [peptide]-C-terminal glycine + 2 L-ascorbate + O2 = a [peptide]-C-terminal (2S)-2-hydroxyglycine + 2 monodehydro-L-ascorbate radical + H2O. Monooxygenase that catalyzes an essential reaction in C-terminal alpha-amidation of peptides. Produces an unstable peptidyl(2-hydroxyglycine) intermediate. C-terminal amidation of peptides such as neuropeptides is essential for full biological activity. This Caenorhabditis elegans protein is Probable peptidylglycine alpha-hydroxylating monooxygenase 1.